Here is a 271-residue protein sequence, read N- to C-terminus: Formamidopyrimidine-DNA glycosylase (271 aa).

Pro-2 functions as the Schiff-base intermediate with DNA in the catalytic mechanism. The Proton donor role is filled by Glu-3. The active-site Proton donor; for beta-elimination activity is Lys-58. Residues His-91, Arg-110, and Arg-152 each contribute to the DNA site. The FPG-type zinc finger occupies 237 to 271 (LVYGREGQPCVHCGRPIRCETIGQRSSYFCTRCQR). Arg-261 functions as the Proton donor; for delta-elimination activity in the catalytic mechanism.

Belongs to the FPG family. As to quaternary structure, monomer. It depends on Zn(2+) as a cofactor.

The catalysed reaction is Hydrolysis of DNA containing ring-opened 7-methylguanine residues, releasing 2,6-diamino-4-hydroxy-5-(N-methyl)formamidopyrimidine.. It catalyses the reaction 2'-deoxyribonucleotide-(2'-deoxyribose 5'-phosphate)-2'-deoxyribonucleotide-DNA = a 3'-end 2'-deoxyribonucleotide-(2,3-dehydro-2,3-deoxyribose 5'-phosphate)-DNA + a 5'-end 5'-phospho-2'-deoxyribonucleoside-DNA + H(+). In terms of biological role, involved in base excision repair of DNA damaged by oxidation or by mutagenic agents. Acts as a DNA glycosylase that recognizes and removes damaged bases. Has a preference for oxidized purines, such as 7,8-dihydro-8-oxoguanine (8-oxoG). Has AP (apurinic/apyrimidinic) lyase activity and introduces nicks in the DNA strand. Cleaves the DNA backbone by beta-delta elimination to generate a single-strand break at the site of the removed base with both 3'- and 5'-phosphates. This Syntrophotalea carbinolica (strain DSM 2380 / NBRC 103641 / GraBd1) (Pelobacter carbinolicus) protein is Formamidopyrimidine-DNA glycosylase.